Consider the following 122-residue polypeptide: Small ribosomal subunit protein uS13 (122 aa).

The disordered stretch occupies residues 95–122; that stretch reads NLPVRGQRTHTNARTRKGKAKPIAGKKK.

The protein belongs to the universal ribosomal protein uS13 family. In terms of assembly, part of the 30S ribosomal subunit. Forms a loose heterodimer with protein S19. Forms two bridges to the 50S subunit in the 70S ribosome.

Its function is as follows. Located at the top of the head of the 30S subunit, it contacts several helices of the 16S rRNA. In the 70S ribosome it contacts the 23S rRNA (bridge B1a) and protein L5 of the 50S subunit (bridge B1b), connecting the 2 subunits; these bridges are implicated in subunit movement. Contacts the tRNAs in the A and P-sites. In Methylobacterium sp. (strain 4-46), this protein is Small ribosomal subunit protein uS13.